The chain runs to 538 residues: Transmembrane protein 266 (538 aa).

The Cytoplasmic portion of the chain corresponds to 1–102 (MALVTSFNMA…VFLLSASLNS (102 aa)). Residues 103-123 (FLVACVILVVILLTLELLIDT) form a helical membrane-spanning segment. The Extracellular segment spans residues 124 to 130 (KLLQFSN). A helical membrane pass occupies residues 131–151 (AFQFAGVIHWISLVILSVFFS). At 152 to 169 (ETVLRIVVLGIWDYIENK) the chain is on the cytoplasmic side. Residues 170–190 (IEVFDGAVIILSLAPMVASTV) traverse the membrane as a helical segment. Residues 191-199 (ANGPRSPWD) lie on the Extracellular side of the membrane. The chain crosses the membrane as a helical span at residues 200 to 220 (AISLIIMFRIWRVKRVIDAYV). Topologically, residues 221–538 (LPVKLEMEMV…EPKLHTVPEA (318 aa)) are cytoplasmic. Positions 232–278 (QQYEKAKAIQDEQLERLTQICQEQGFEIRQLRAHLAQQDLDLAAERE) form a coiled coil. 2 disordered regions span residues 380-435 (NSTC…PLPL) and 453-483 (SSLS…VQTS). Residues 381–396 (STCASATSETTSHSTC) are compositionally biased toward low complexity. A compositionally biased stretch (polar residues) spans 397–417 (GSVTRAQSASSQTLGSSTDCS). Over residues 425 to 434 (PSKPRSSPLP) the composition is skewed to low complexity.

Homodimer; disulfide-linked. In brain, present in the granule layer of the cerebellar cortex. Localizes on the post-synaptic side of glutamatergic mossy fibers and granule cells in the cerebellum (at protein level). In terms of tissue distribution, predominantly expressed in granule cells in cerebellum (at protein level).

The protein resides in the cell projection. It is found in the dendrite. It localises to the perikaryon. Its subcellular location is the cell membrane. Voltage-sensor protein present on the post-synaptic side of glutamatergic mossy fibers and granule cells in the cerebellum. Despite the presence of a voltage-sensor segment, does not form a functional ion channel and its precise role remains unclear. Undergoes both rapid and slow structural rearrangements in response to changes in voltage. Contains a zinc-binding site that can regulate the slow conformational transition. In Mus musculus (Mouse), this protein is Transmembrane protein 266.